Reading from the N-terminus, the 135-residue chain is Classical arabinogalactan protein 4 (135 aa).

The signal sequence occupies residues 1–21; sequence MGSKIVQVFLMLALFATSALA. At Gln22 the chain carries Pyrrolidone carboxylic acid. The interval 22–112 is disordered; sequence QAPAPTPTAT…PSDASPAPSA (91 aa). 4-hydroxyproline occurs at positions 24, 26, 28, 32, 33, 34, 37, 38, and 39. O-linked (Ara...) hydroxyproline glycans are attached at residues Pro24, Pro26, Pro28, Pro32, Pro33, Pro34, Pro37, Pro38, and Pro39. Pro residues predominate over residues 25–76; that stretch reads APTPTATPPPATPPPVATPPPVATPPPAATPAPATPPPAATPAPATTPPSVA. Residues 96–112 are compositionally biased toward low complexity; it reads SPSSAPGPSDASPAPSA. Ser111 carries GPI-anchor amidated serine lipidation. The propeptide at 112-135 is removed in mature form; it reads AAFSNKAFFAGTAFAAIMYAAVLA.

Belongs to the classical AGP family. Post-translationally, O-glycosylated on hydroxyprolines; noncontiguous hydroxylproline residues are glycosylated with arabinogalactan. As to expression, highly expressed in roots, flowers and leaves.

The protein resides in the cell membrane. Proteoglycan that seems to be implicated in diverse developmental roles such as differentiation, cell-cell recognition, embryogenesis and programmed cell death. This chain is Classical arabinogalactan protein 4 (AGP4), found in Arabidopsis thaliana (Mouse-ear cress).